The chain runs to 246 residues: DNA-directed RNA polymerase subunit alpha (246 aa).

It belongs to the RNA polymerase alpha chain family. In plastids the minimal PEP RNA polymerase catalytic core is composed of four subunits: alpha, beta, beta', and beta''. When a (nuclear-encoded) sigma factor is associated with the core the holoenzyme is formed, which can initiate transcription (Potential).

The protein localises to the plastid. It catalyses the reaction RNA(n) + a ribonucleoside 5'-triphosphate = RNA(n+1) + diphosphate. Functionally, DNA-dependent RNA polymerase catalyzes the transcription of DNA into RNA using the four ribonucleoside triphosphates as substrates. The polypeptide is DNA-directed RNA polymerase subunit alpha (rpoA) (Helicosporidium sp. subsp. Simulium jonesii (Green alga)).